Reading from the N-terminus, the 292-residue chain is MSDPVELLKRAEKKGVPSSGFMKLFSGSDSYKFEEAADLCVQAATIYRLRKELNLAGDSFLKAADYQKKAGNEDEAGNTYVEAYKCFKSGGNSVNAVDSLENAIQIFTHRGQFRRGANFKFELGEILENDLHDYAKAIDCYELAGEWYAQDQSVALSNKCFIKCADLKALDGQYIEASDIYSKLIKSSMGNRLSQWSLKDYFLKKGLCQLAATDAVAAARTLQEGQSEDPNFADSRESNFLKSLIDAVNEGDSEQLSEHCKEFDNFMRLDKWKITILNKIKESIQQQEDDLL.

At serine 2 the chain carries N-acetylserine. A Glycyl lysine isopeptide (Lys-Gly) (interchain with G-Cter in ubiquitin) cross-link involves residue lysine 261.

The protein belongs to the SNAP family. In terms of assembly, binds to vacuolar cis-SNARE complexes composed of the v-SNAREs NYV1, VTI1 and YKT6, and the t-SNAREs VAM3 and VAM7. Interacts with SEC18.

It localises to the membrane. SNARE complex protein that binds to cis-SNARE complexes on membranes and is required for vesicular transport between the endoplasmic reticulum and the Golgi apparatus and for homotypic vacuole fusion. During the priming step of membrane fusion, is released from cis-SNARE complexes by SEC18 to establish a pool of unpaired SNAREs, which are required for interactions in trans during docking and fusion steps. Can displace HOPS from SNARE complexes, which may be a prerequisite for trans-SNARE complex disassembly and subsequent rounds of priming, docking and fusion. The chain is Alpha-soluble NSF attachment protein (SEC17) from Saccharomyces cerevisiae (strain ATCC 204508 / S288c) (Baker's yeast).